The chain runs to 1008 residues: Ubiquitin carboxyl-terminal hydrolase 16 (1008 aa).

Residues Leu7–Val27 traverse the membrane as a helical segment. Residues Cys74, Cys77, Cys85, Cys88, Cys94, Cys98, His107, and Cys111 each contribute to the Zn(2+) site. An MYND-type zinc finger spans residues Cys74–Cys111. 5 disordered regions span residues Asp122–Pro149, Leu159–Asp178, Val187–His233, Ser275–Leu309, and Ser326–Asp379. Residues Ser193 to Ser203 are compositionally biased toward low complexity. The span at Glu222–His233 shows a compositional bias: basic and acidic residues. Residues Gly284–Ser295 show a composition bias toward polar residues. Positions Ser340–Ser351 are enriched in low complexity. The region spanning Cys542–Cys847 is the USP domain. Cys551 acts as the Nucleophile in catalysis. The Proton acceptor role is filled by His807. 2 disordered regions span residues Lys859–Gln905 and Phe952–Arg1008. Low complexity-rich tracts occupy residues Ser878–Ser888 and Ser965–Pro992.

This sequence belongs to the peptidase C19 family. As to quaternary structure, interacts with SHM1 and SHM4. Interacts with HIPP27. In terms of tissue distribution, expressed in flowers, siliques, rosette leaves, cauline leaves, stems and at a lower level in roots. In roots, expressed in the sieve elements.

The protein localises to the membrane. It carries out the reaction Thiol-dependent hydrolysis of ester, thioester, amide, peptide and isopeptide bonds formed by the C-terminal Gly of ubiquitin (a 76-residue protein attached to proteins as an intracellular targeting signal).. In terms of biological role, recognizes and hydrolyzes the peptide bond at the C-terminal Gly of ubiquitin. Involved in the processing of poly-ubiquitin precursors as well as that of ubiquitinated proteins. Involved in salt tolerance by modulating sodium transport activity and repressing cell death at least partially through modulating SHM1 stability and activity. Involved in cadmium tolerance by interacting with HIPP27 and probably modulating its stability. In Arabidopsis thaliana (Mouse-ear cress), this protein is Ubiquitin carboxyl-terminal hydrolase 16 (UBP16).